Here is a 428-residue protein sequence, read N- to C-terminus: Glutamate-1-semialdehyde 2,1-aminomutase (428 aa).

Lys-267 bears the N6-(pyridoxal phosphate)lysine mark.

The protein belongs to the class-III pyridoxal-phosphate-dependent aminotransferase family. HemL subfamily. Homodimer. The cofactor is pyridoxal 5'-phosphate.

It localises to the cytoplasm. It carries out the reaction (S)-4-amino-5-oxopentanoate = 5-aminolevulinate. The protein operates within porphyrin-containing compound metabolism; protoporphyrin-IX biosynthesis; 5-aminolevulinate from L-glutamyl-tRNA(Glu): step 2/2. This chain is Glutamate-1-semialdehyde 2,1-aminomutase, found in Persephonella marina (strain DSM 14350 / EX-H1).